The following is a 424-amino-acid chain: Glutamyl-tRNA reductase (424 aa).

Residues 53–56 (TCNR), S111, 116–118 (EPQ), and Q122 each bind substrate. Residue C54 is the Nucleophile of the active site. 191 to 196 (GAGEMI) lines the NADP(+) pocket.

The protein belongs to the glutamyl-tRNA reductase family. As to quaternary structure, homodimer.

It catalyses the reaction (S)-4-amino-5-oxopentanoate + tRNA(Glu) + NADP(+) = L-glutamyl-tRNA(Glu) + NADPH + H(+). It functions in the pathway porphyrin-containing compound metabolism; protoporphyrin-IX biosynthesis; 5-aminolevulinate from L-glutamyl-tRNA(Glu): step 1/2. Its function is as follows. Catalyzes the NADPH-dependent reduction of glutamyl-tRNA(Glu) to glutamate 1-semialdehyde (GSA). This is Glutamyl-tRNA reductase from Bordetella bronchiseptica (strain ATCC BAA-588 / NCTC 13252 / RB50) (Alcaligenes bronchisepticus).